The primary structure comprises 204 residues: Large ribosomal subunit protein uL4 (204 aa).

A disordered region spans residues 49–75; sequence TKGRSDVSGGGKKPWRQKGRGGARAGS.

The protein belongs to the universal ribosomal protein uL4 family. Part of the 50S ribosomal subunit.

In terms of biological role, one of the primary rRNA binding proteins, this protein initially binds near the 5'-end of the 23S rRNA. It is important during the early stages of 50S assembly. It makes multiple contacts with different domains of the 23S rRNA in the assembled 50S subunit and ribosome. Its function is as follows. Forms part of the polypeptide exit tunnel. This is Large ribosomal subunit protein uL4 from Campylobacter jejuni (strain RM1221).